A 62-amino-acid polypeptide reads, in one-letter code: Calmodulin regulator protein PCP4 (62 aa).

The segment at 1–39 (MSERQSAGATNGKDKTSGDNDGQKKVQEEFDIDMDAPET) is disordered. Residues 12-28 (GKDKTSGDNDGQKKVQE) show a composition bias toward basic and acidic residues. Residues 28 to 40 (EEFDIDMDAPETE) form an acidic; binds calcium and is required for modulating the calcium-binding kinetics of calmodulin region. The IQ domain maps to 39 to 62 (TERAAVAIQSQFRKFQKKKAGSQS).

It belongs to the PCP4 family. In terms of assembly, binds to both calcium-free and calcium-bound calmodulin. The affinity for the calcium-bound form is 50-fold greater.

Functionally, functions as a modulator of calcium-binding by calmodulin. Thereby, regulates calmodulin activity and the different processes it controls. For instance, may play a role in neuronal differentiation through activation of calmodulin-dependent kinase signaling pathways. This is Calmodulin regulator protein PCP4 from Mus musculus (Mouse).